Here is a 476-residue protein sequence, read N- to C-terminus: Aspartyl/glutamyl-tRNA(Asn/Gln) amidotransferase subunit B (476 aa).

The protein belongs to the GatB/GatE family. GatB subfamily. Heterotrimer of A, B and C subunits.

It carries out the reaction L-glutamyl-tRNA(Gln) + L-glutamine + ATP + H2O = L-glutaminyl-tRNA(Gln) + L-glutamate + ADP + phosphate + H(+). The catalysed reaction is L-aspartyl-tRNA(Asn) + L-glutamine + ATP + H2O = L-asparaginyl-tRNA(Asn) + L-glutamate + ADP + phosphate + 2 H(+). Functionally, allows the formation of correctly charged Asn-tRNA(Asn) or Gln-tRNA(Gln) through the transamidation of misacylated Asp-tRNA(Asn) or Glu-tRNA(Gln) in organisms which lack either or both of asparaginyl-tRNA or glutaminyl-tRNA synthetases. The reaction takes place in the presence of glutamine and ATP through an activated phospho-Asp-tRNA(Asn) or phospho-Glu-tRNA(Gln). This is Aspartyl/glutamyl-tRNA(Asn/Gln) amidotransferase subunit B from Laribacter hongkongensis (strain HLHK9).